The primary structure comprises 568 residues: 2-succinyl-5-enolpyruvyl-6-hydroxy-3-cyclohexene-1-carboxylate synthase (568 aa).

It belongs to the TPP enzyme family. MenD subfamily. Homodimer. Mg(2+) serves as cofactor. It depends on Mn(2+) as a cofactor. Requires thiamine diphosphate as cofactor.

The enzyme catalyses isochorismate + 2-oxoglutarate + H(+) = 5-enolpyruvoyl-6-hydroxy-2-succinyl-cyclohex-3-ene-1-carboxylate + CO2. It functions in the pathway quinol/quinone metabolism; 1,4-dihydroxy-2-naphthoate biosynthesis; 1,4-dihydroxy-2-naphthoate from chorismate: step 2/7. The protein operates within quinol/quinone metabolism; menaquinone biosynthesis. In terms of biological role, catalyzes the thiamine diphosphate-dependent decarboxylation of 2-oxoglutarate and the subsequent addition of the resulting succinic semialdehyde-thiamine pyrophosphate anion to isochorismate to yield 2-succinyl-5-enolpyruvyl-6-hydroxy-3-cyclohexene-1-carboxylate (SEPHCHC). This chain is 2-succinyl-5-enolpyruvyl-6-hydroxy-3-cyclohexene-1-carboxylate synthase, found in Haemophilus influenzae (strain PittGG).